A 159-amino-acid chain; its full sequence is Endoribonuclease YbeY (159 aa).

3 residues coordinate Zn(2+): His125, His129, and His135.

The protein belongs to the endoribonuclease YbeY family. The cofactor is Zn(2+).

It is found in the cytoplasm. Its function is as follows. Single strand-specific metallo-endoribonuclease involved in late-stage 70S ribosome quality control and in maturation of the 3' terminus of the 16S rRNA. The protein is Endoribonuclease YbeY of Enterococcus faecalis (strain ATCC 700802 / V583).